The sequence spans 279 residues: NADPH-dependent 7-cyano-7-deazaguanine reductase (279 aa).

86 to 88 (VES) contacts substrate. 88-89 (SK) serves as a coordination point for NADPH. Catalysis depends on Cys187, which acts as the Thioimide intermediate. Asp194 acts as the Proton donor in catalysis. Substrate is bound at residue 226–227 (HE). An NADPH-binding site is contributed by 255–256 (RG).

The protein belongs to the GTP cyclohydrolase I family. QueF type 2 subfamily. As to quaternary structure, homodimer.

It is found in the cytoplasm. It carries out the reaction 7-aminomethyl-7-carbaguanine + 2 NADP(+) = 7-cyano-7-deazaguanine + 2 NADPH + 3 H(+). Its pathway is tRNA modification; tRNA-queuosine biosynthesis. Functionally, catalyzes the NADPH-dependent reduction of 7-cyano-7-deazaguanine (preQ0) to 7-aminomethyl-7-deazaguanine (preQ1). This chain is NADPH-dependent 7-cyano-7-deazaguanine reductase, found in Actinobacillus succinogenes (strain ATCC 55618 / DSM 22257 / CCUG 43843 / 130Z).